Consider the following 716-residue polypeptide: Putative proline--tRNA ligase C19C7.06 (716 aa).

The segment at 655–675 is disordered; it reads KNSARQVNGDEPEDEKAPSMG.

Belongs to the class-II aminoacyl-tRNA synthetase family.

It localises to the cytoplasm. It catalyses the reaction tRNA(Pro) + L-proline + ATP = L-prolyl-tRNA(Pro) + AMP + diphosphate. This chain is Putative proline--tRNA ligase C19C7.06 (prs1), found in Schizosaccharomyces pombe (strain 972 / ATCC 24843) (Fission yeast).